We begin with the raw amino-acid sequence, 145 residues long: 3-hydroxyacyl-[acyl-carrier-protein] dehydratase FabZ (145 aa).

Histidine 49 is an active-site residue.

It belongs to the thioester dehydratase family. FabZ subfamily.

It is found in the cytoplasm. The catalysed reaction is a (3R)-hydroxyacyl-[ACP] = a (2E)-enoyl-[ACP] + H2O. Its function is as follows. Involved in unsaturated fatty acids biosynthesis. Catalyzes the dehydration of short chain beta-hydroxyacyl-ACPs and long chain saturated and unsaturated beta-hydroxyacyl-ACPs. The chain is 3-hydroxyacyl-[acyl-carrier-protein] dehydratase FabZ from Rickettsia massiliae (strain Mtu5).